Reading from the N-terminus, the 453-residue chain is MSFSAVILAAGKGTRMYSNVPKVLHTLAGKPMAKHVIDTCSDLGASHIHLVYGHGGDTMQQVLADEPVSWILQAEQLGTGHAVNQASSGLADNEKVLILYGDVPLISGDTLTNLLDAQPDGGIALLTVVLDNPVGYGRIVRRNGPVVAIVEQKDASEEQKLIKEINTGVMVANGGDLKRWLGQLKNENSQGEYYLTDIIAIAHDEGRAVEAVHPVNPIEVEGVNNRIQLARLERAYQAMQAERLLEQGVMLRDPSRFDLRGKLQCGTDVEIDVNVIIEGNVSIGNNVLIGTGCVLKDCEIDDNSVIRPYSVIEGATVGEDCTVGPFTRLRPGAELVGDSHVGNFVEMKKSRLGRGSKANHLTYLGDADIGDRVNIGAGTITCNYDGVNKFKTEIGDDVFVGSDTQLIAPVKIGKGATIGAGATINRDIGEGELVITRAPARTIKGWKRPVKQK.

A pyrophosphorylase region spans residues Met-1–Arg-226. Residues Leu-8–Gly-11, Lys-22, Gln-73, Gly-78–Thr-79, Tyr-100–Asp-102, Gly-137, Glu-151, Asn-166, and Asn-224 contribute to the UDP-N-acetyl-alpha-D-glucosamine site. Asp-102 lines the Mg(2+) pocket. Asn-224 lines the Mg(2+) pocket. Residues Ile-227–Gln-247 are linker. The interval Gly-248–Lys-453 is N-acetyltransferase. Residues Arg-330 and Lys-348 each contribute to the UDP-N-acetyl-alpha-D-glucosamine site. The active-site Proton acceptor is His-360. UDP-N-acetyl-alpha-D-glucosamine contacts are provided by Tyr-363 and Asn-374. Acetyl-CoA-binding positions include Ala-377, Asn-383–Tyr-384, Ser-402, Ala-420, and Arg-437.

This sequence in the N-terminal section; belongs to the N-acetylglucosamine-1-phosphate uridyltransferase family. In the C-terminal section; belongs to the transferase hexapeptide repeat family. As to quaternary structure, homotrimer. It depends on Mg(2+) as a cofactor.

It is found in the cytoplasm. The enzyme catalyses alpha-D-glucosamine 1-phosphate + acetyl-CoA = N-acetyl-alpha-D-glucosamine 1-phosphate + CoA + H(+). The catalysed reaction is N-acetyl-alpha-D-glucosamine 1-phosphate + UTP + H(+) = UDP-N-acetyl-alpha-D-glucosamine + diphosphate. It functions in the pathway nucleotide-sugar biosynthesis; UDP-N-acetyl-alpha-D-glucosamine biosynthesis; N-acetyl-alpha-D-glucosamine 1-phosphate from alpha-D-glucosamine 6-phosphate (route II): step 2/2. It participates in nucleotide-sugar biosynthesis; UDP-N-acetyl-alpha-D-glucosamine biosynthesis; UDP-N-acetyl-alpha-D-glucosamine from N-acetyl-alpha-D-glucosamine 1-phosphate: step 1/1. The protein operates within bacterial outer membrane biogenesis; LPS lipid A biosynthesis. In terms of biological role, catalyzes the last two sequential reactions in the de novo biosynthetic pathway for UDP-N-acetylglucosamine (UDP-GlcNAc). The C-terminal domain catalyzes the transfer of acetyl group from acetyl coenzyme A to glucosamine-1-phosphate (GlcN-1-P) to produce N-acetylglucosamine-1-phosphate (GlcNAc-1-P), which is converted into UDP-GlcNAc by the transfer of uridine 5-monophosphate (from uridine 5-triphosphate), a reaction catalyzed by the N-terminal domain. The chain is Bifunctional protein GlmU from Photobacterium profundum (strain SS9).